A 229-amino-acid polypeptide reads, in one-letter code: Leucyl/phenylalanyl-tRNA--protein transferase (229 aa).

It belongs to the L/F-transferase family.

Its subcellular location is the cytoplasm. It carries out the reaction N-terminal L-lysyl-[protein] + L-leucyl-tRNA(Leu) = N-terminal L-leucyl-L-lysyl-[protein] + tRNA(Leu) + H(+). The catalysed reaction is N-terminal L-arginyl-[protein] + L-leucyl-tRNA(Leu) = N-terminal L-leucyl-L-arginyl-[protein] + tRNA(Leu) + H(+). It catalyses the reaction L-phenylalanyl-tRNA(Phe) + an N-terminal L-alpha-aminoacyl-[protein] = an N-terminal L-phenylalanyl-L-alpha-aminoacyl-[protein] + tRNA(Phe). Functions in the N-end rule pathway of protein degradation where it conjugates Leu, Phe and, less efficiently, Met from aminoacyl-tRNAs to the N-termini of proteins containing an N-terminal arginine or lysine. This Pseudomonas syringae pv. tomato (strain ATCC BAA-871 / DC3000) protein is Leucyl/phenylalanyl-tRNA--protein transferase.